A 792-amino-acid chain; its full sequence is Phenylalanine--tRNA ligase beta subunit (792 aa).

The region spanning leucine 39–alanine 154 is the tRNA-binding domain. The 78-residue stretch at arginine 403–proline 480 folds into the B5 domain. Mg(2+) contacts are provided by aspartate 456, aspartate 462, glutamate 465, and glutamate 466. The region spanning alanine 695 to asparagine 791 is the FDX-ACB domain.

The protein belongs to the phenylalanyl-tRNA synthetase beta subunit family. Type 1 subfamily. Tetramer of two alpha and two beta subunits. Mg(2+) is required as a cofactor.

Its subcellular location is the cytoplasm. It carries out the reaction tRNA(Phe) + L-phenylalanine + ATP = L-phenylalanyl-tRNA(Phe) + AMP + diphosphate + H(+). The sequence is that of Phenylalanine--tRNA ligase beta subunit (pheT) from Chlamydia pneumoniae (Chlamydophila pneumoniae).